The chain runs to 347 residues: Iron-sulfur cluster assembly protein SufC (347 aa).

Positions 100 to 346 (LEIKDLHAIE…ENKGYSQFLK (247 aa)) constitute an ABC transporter domain. 134 to 141 (GRNGSGKS) is a binding site for ATP.

This sequence belongs to the ABC transporter superfamily. Ycf16 family. In terms of assembly, component of a complex composed of SufB, SufC and SufD in a stoichiometric ratio of 1:2:1. Interacts with SufB. Interacts with SufD; the interaction enhances the ATPase activity of SufC. Post-translationally, proteolytically cleaved.

The protein resides in the plastid. It is found in the apicoplast. The enzyme catalyses ATP + H2O = ADP + phosphate + H(+). It functions in the pathway cofactor biosynthesis; iron-sulfur cluster biosynthesis. In terms of biological role, participates in the sulfur mobilization (SUF) pathway for iron-sulfur (Fe-S) cluster biogenesis. As part of a complex consisting of SufB-SufC(2)-SufD, involved in assembly of [4Fe-4S] clusters. Exhibits ATPase activity. This chain is Iron-sulfur cluster assembly protein SufC, found in Plasmodium falciparum (isolate 3D7).